A 698-amino-acid chain; its full sequence is Probable metal-nicotianamine transporter YSL17 (698 aa).

Residues 1–36 (MAEEARGGQRVVVDDDREDASSVASSTERAFEGEPL) are disordered. The next 14 membrane-spanning stretches (helical) occupy residues 43-63 (VTARSAAVSGVLGAVVSVVAM), 67-87 (LTSGLLPSLGVPAGLLGFFLA), 114-134 (IAVVSCSTIAFSGGFGTYILG), 157-177 (IGRVIAFLFLVNFSGLFIIVP), 216-236 (VVTLFKSLGATVLWPIFQWFF), 277-297 (MITASMLAGSIVSWGILWPYI), 322-342 (VFVGVSMILADGLFTILSALV), 395-415 (WVAVASYAALAALSVVAVPLL), 424-444 (VAAAYVAAPVFAFCNAYGVGV), 463-483 (SWVGMDGGGVVAGLAACGIIV), 511-531 (VGQVAGTALGCVVNPAIFWVF), 567-587 (LPDHSVLLCKLFFAMALALSA), 607-627 (IGVAVAFFVPPRIPVGMAVGC), and 644-664 (LLLPAVASGLICGDGLGSLAS).

This sequence belongs to the YSL (TC 2.A.67.2) family. As to expression, expressed at low levels in roots.

It is found in the membrane. May be involved in the transport of nicotianamine-chelated metals. In Oryza sativa subsp. japonica (Rice), this protein is Probable metal-nicotianamine transporter YSL17 (YSL17).